The chain runs to 239 residues: 7-cyano-7-deazaguanine synthase (239 aa).

13–23 contacts ATP; sequence FSGGQDSTTCL. Residues Cys-201, Cys-216, Cys-219, and Cys-222 each contribute to the Zn(2+) site.

The protein belongs to the QueC family. Zn(2+) serves as cofactor.

The catalysed reaction is 7-carboxy-7-deazaguanine + NH4(+) + ATP = 7-cyano-7-deazaguanine + ADP + phosphate + H2O + H(+). It participates in purine metabolism; 7-cyano-7-deazaguanine biosynthesis. Catalyzes the ATP-dependent conversion of 7-carboxy-7-deazaguanine (CDG) to 7-cyano-7-deazaguanine (preQ(0)). This chain is 7-cyano-7-deazaguanine synthase, found in Bradyrhizobium sp. (strain BTAi1 / ATCC BAA-1182).